The chain runs to 501 residues: Acid-sensing ion channel 1A (501 aa).

The Cytoplasmic segment spans residues 1-54; the sequence is MKTSVMDLKVEPMDIDFDQPPPLQVFAHTSTLHGISHIFSYEKITAKCCLWVVF. The helical transmembrane segment at 55–71 threads the bilayer; sequence FLSSLTFLMYVCIDRIQ. At 72-429 the chain is on the extracellular side; it reads FYLEYPHVTK…ETIEQRKAYE (358 aa). 7 disulfide bridges follow: Cys-98–Cys-199, Cys-177–Cys-184, Cys-294–Cys-369, Cys-312–Cys-365, Cys-316–Cys-363, Cys-325–Cys-347, and Cys-327–Cys-339. Asn-164 carries an N-linked (GlcNAc...) asparagine glycan. A glycan (N-linked (GlcNAc...) asparagine) is linked at Asn-370. A discontinuously helical transmembrane segment spans residues 430 to 460; it reads VAGLLGDIGGQMGLFIGASILTILELFDYLY. Residues 446 to 448 carry the GAS motif; ion selectivity filter motif; the sequence is GAS. The Cytoplasmic portion of the chain corresponds to 461–501; that stretch reads EVMKYRLCRCSNKKHHNNNNNTDHNAVFSLDDVNCHVSKFH.

Belongs to the amiloride-sensitive sodium channel (TC 1.A.6) family. ASIC1 subfamily. In terms of assembly, homotrimer. Heterotrimer; with other ASIC proteins producing channel with different properties. Interacts with asic1c. In terms of tissue distribution, expressed in central nervous system. Faintly expressed in the trunk, presumably in dorsal root ganglia.

Its subcellular location is the cell membrane. It is found in the postsynaptic cell membrane. The protein resides in the cell projection. The protein localises to the dendrite. The enzyme catalyses Na(+)(in) = Na(+)(out). It carries out the reaction K(+)(in) = K(+)(out). The catalysed reaction is Li(+)(in) = Li(+)(out). It catalyses the reaction Ca(2+)(in) = Ca(2+)(out). Its activity is regulated as follows. Inhibited by the diuretic drug amiloride. Functionally, forms voltage-independent, pH-gated trimeric sodium channels that act as postsynaptic excitatory receptors in the nervous system, playing a crucial role in regulating synaptic plasticity, learning, and memory. Upon extracellular pH drop this channel elicits transient, fast activating, and completely desensitizing inward currents. Displays high selectivity for sodium ions but can also permit the permeation of other cations. This is Acid-sensing ion channel 1A (asic1a) from Danio rerio (Zebrafish).